The primary structure comprises 241 residues: Small ribosomal subunit protein uS3 (241 aa).

Positions 39 to 107 (IREVLMKNLK…EVVINIVEVR (69 aa)) constitute a KH type-2 domain. The tract at residues 219-241 (MAELDHAGGGGGGERRRRERDAA) is disordered. Over residues 231-241 (GERRRRERDAA) the composition is skewed to basic and acidic residues.

The protein belongs to the universal ribosomal protein uS3 family. As to quaternary structure, part of the 30S ribosomal subunit. Forms a tight complex with proteins S10 and S14.

Its function is as follows. Binds the lower part of the 30S subunit head. Binds mRNA in the 70S ribosome, positioning it for translation. The sequence is that of Small ribosomal subunit protein uS3 from Beijerinckia indica subsp. indica (strain ATCC 9039 / DSM 1715 / NCIMB 8712).